Here is a 393-residue protein sequence, read N- to C-terminus: 2-methylcitrate synthase (393 aa).

The substrate site is built by arginine 92 and histidine 207. Histidine 242 is a catalytic residue. 275–279 (KIMGF) is a binding site for CoA. Residue histidine 281 is part of the active site. Arginine 290 provides a ligand contact to substrate. Aspartate 332 is an active-site residue. Residues arginine 357 and arginine 376 each contribute to the substrate site.

It belongs to the citrate synthase family. In terms of assembly, homodimer.

It catalyses the reaction propanoyl-CoA + oxaloacetate + H2O = (2S,3S)-2-methylcitrate + CoA + H(+). It carries out the reaction oxaloacetate + acetyl-CoA + H2O = citrate + CoA + H(+). It functions in the pathway organic acid metabolism; propanoate degradation. The protein operates within carbohydrate metabolism; tricarboxylic acid cycle; isocitrate from oxaloacetate: step 1/2. Functionally, involved in the catabolism of short chain fatty acids (SCFA) via the tricarboxylic acid (TCA)(acetyl degradation route) and via the 2-methylcitrate cycle I (propionate degradation route). Catalyzes the Claisen condensation of propionyl-CoA and oxaloacetate (OAA) to yield 2-methylcitrate (2-MC) and CoA. Also catalyzes the condensation of oxaloacetate with acetyl-CoA. This chain is 2-methylcitrate synthase (gltA1), found in Mycobacterium tuberculosis (strain ATCC 35801 / TMC 107 / Erdman).